A 262-amino-acid chain; its full sequence is Probable carboxylesterase Culp3 (262 aa).

The first 41 residues, M1–A41, serve as a signal peptide directing secretion. A disulfide bridge links C44 with C114. The active-site Nucleophile is S125. The cysteines at positions 188 and 195 are disulfide-linked. The active site involves D192. H206 functions as the Proton donor/acceptor in the catalytic mechanism. Residues L241–R262 are disordered.

The protein belongs to the cutinase family.

It is found in the secreted. In terms of biological role, shows weak esterase activity with the p-nitrophenol-linked aliphatic ester pNP-butyrate. Does not exhibit cutinase activity. This chain is Probable carboxylesterase Culp3 (cut3), found in Mycobacterium tuberculosis (strain ATCC 25618 / H37Rv).